The following is a 218-amino-acid chain: 5-oxoprolinase subunit B (218 aa).

Belongs to the PxpB family. In terms of assembly, forms a complex composed of PxpA, PxpB and PxpC.

It carries out the reaction 5-oxo-L-proline + ATP + 2 H2O = L-glutamate + ADP + phosphate + H(+). In terms of biological role, catalyzes the cleavage of 5-oxoproline to form L-glutamate coupled to the hydrolysis of ATP to ADP and inorganic phosphate. This is 5-oxoprolinase subunit B from Escherichia coli O157:H7.